The chain runs to 74 residues: MTSEFFAKILIILIRLYQILISPLFAPCCRFYPSCSEYAIIAVRKHGLSKGSRLALIRLFKCHPFHPGGYDPVR.

It belongs to the UPF0161 family.

Its subcellular location is the cell inner membrane. Its function is as follows. Could be involved in insertion of integral membrane proteins into the membrane. The polypeptide is Putative membrane protein insertion efficiency factor (Syntrophus aciditrophicus (strain SB)).